Consider the following 163-residue polypeptide: Ribosome maturation factor RimM (163 aa).

The region spanning 90–155 (VGEYYCKDLV…ADIDLNKKRL (66 aa)) is the PRC barrel domain.

This sequence belongs to the RimM family. In terms of assembly, binds ribosomal protein uS19.

Its subcellular location is the cytoplasm. Its function is as follows. An accessory protein needed during the final step in the assembly of 30S ribosomal subunit, possibly for assembly of the head region. Essential for efficient processing of 16S rRNA. May be needed both before and after RbfA during the maturation of 16S rRNA. It has affinity for free ribosomal 30S subunits but not for 70S ribosomes. This Neorickettsia sennetsu (strain ATCC VR-367 / Miyayama) (Ehrlichia sennetsu) protein is Ribosome maturation factor RimM.